A 129-amino-acid polypeptide reads, in one-letter code: Azurin-2 (129 aa).

Positions 1–129 (AQCEATVESN…MMKGTLKLGS (129 aa)) constitute a Plastocyanin-like domain. An intrachain disulfide couples cysteine 3 to cysteine 26. Residues histidine 46, cysteine 112, histidine 117, and methionine 121 each contribute to the Cu cation site.

It localises to the periplasm. Its function is as follows. Transfers electrons from cytochrome c551 to cytochrome oxidase. This chain is Azurin-2, found in Alcaligenes xylosoxydans xylosoxydans (Achromobacter xylosoxidans).